The chain runs to 243 residues: Adenosine 5'-phosphosulfate reductase (243 aa).

It belongs to the PAPS reductase family. CysH subfamily. Requires [4Fe-4S] cluster as cofactor.

The protein localises to the cytoplasm. It carries out the reaction [thioredoxin]-disulfide + sulfite + AMP + 2 H(+) = adenosine 5'-phosphosulfate + [thioredoxin]-dithiol. The protein operates within sulfur metabolism; hydrogen sulfide biosynthesis; sulfite from sulfate. In terms of biological role, catalyzes the formation of sulfite from adenosine 5'-phosphosulfate (APS) using thioredoxin as an electron donor. This chain is Adenosine 5'-phosphosulfate reductase, found in Staphylococcus haemolyticus (strain JCSC1435).